Here is a 93-residue protein sequence, read N- to C-terminus: Putative pterin-4-alpha-carbinolamine dehydratase (93 aa).

The protein belongs to the pterin-4-alpha-carbinolamine dehydratase family.

It carries out the reaction (4aS,6R)-4a-hydroxy-L-erythro-5,6,7,8-tetrahydrobiopterin = (6R)-L-erythro-6,7-dihydrobiopterin + H2O. This chain is Putative pterin-4-alpha-carbinolamine dehydratase, found in Roseiflexus sp. (strain RS-1).